The primary structure comprises 1222 residues: MEADWDEVSQVAVPPPGPHLLPTVASTVAFDDSQELLWVGNEFGRVSSFYGPELQRYTSVKAHASSEGQVRQFLFHDKGVISLSANSVHLASRCGLTQWHISHPEMTELRCMSFTAQPHKIIVAGLQSAMFIIDVEKGAIVDQLSTEYRYTIMKRSRYLCAATDTGSVNVLSLTDFSVVKSWKAHGAVINDMDARNDFLVTCGFSVRHAGSPIVDPLANVYDLKSLIPLPPIPFHAGAAFVRMHPRLQTTSFIASQTGQLQVVDLMNPNTINLRQANVAFMLGLEVSPSGEALAINDAECSIHLWGSPSKIHFNEIGKETEFSDIPTRPSMLDWSNDTPLNVIGMPYYHERLLSAWPSHLIFEIGNAPVPMDPAILPYLRPSEIGQYAQNPRKKRRYQVENTRLQSSTEVALAAPKFLSEKARELPNSKPEGAQEAVGALQGLKINGETKEDPLLKYSNVEIKYSKFGVDDFDFRYYNKTEFSGLETHIANSFTNSLLQLLKFIPLVRNLALHHVSTNCLCESCLLCEMGFLFDMLDKANGQNCQATNLLKTFSGFREAANLGLLEESLSNKSLSSAIQSVHRFFLNQIAHDYRTVYPNSDSLDNTLSTAAVESICCMFCRNEIVRPGNAFVTELIYPAADPKQAHRNQACRFSNILRSSIERETQNRGWCSTCRRYQQVSIRKTVQRMPLVLMLNAAINNSAHRRFWSIPGWLPEKIGVMIEDNQIQCYEGEQLRIRQQNNFEGLVVYELVGIVAEIDIVEQKKPHLVSFVDVSISAREPTKKSNWHLFNDFLVTGVSKEEVFSFNQGWKSPCTLAYQISTGRHGLDDSWKNELDTTLLFYEWSMNNRPPTDKCHILKSEEKPIAGTPIALDTEFVDLEKAEIEVKADGTQEMIRPSKSGLARVSVIRGSGNDEGVPFIDDYITIKDPIVDYVTQYSGIKPGDLDPRTSRHNLVALKVAYKKLWLLLNLGCVFVGHGLASDFRKINIQVPKAQTIDTQYLFFHPGKNRRLSLRYLAWAVFKEYIQEETTTTTSTSITTTTNPNIHDANTSTTTTTAITTTPPEGHDSIEDARMALRLWKKFKEYEDAGIVNQILEEIFREGVKVGFRPPARYPSQATPNPNNNNINNGVNPNGLSTPGSTNPISRLPLSGRNTPDFILPASASAAASVTGGPAGGGSSNGSMSGSTPSTPRQAFRRSTALTPSNGSFGGAKGLTFGGSPMR.

WD repeat units lie at residues 104-143 and 276-315; these read PEMT…IVDQ and ANVA…HFNE. A linker region spans residues 316-451; the sequence is IGKETEFSDI…GLKINGETKE (136 aa). A USP domain is found at 452–821; that stretch reads DPLLKYSNVE…SPCTLAYQIS (370 aa). The Exonuclease domain maps to 871–1027; it reads ALDTEFVDLE…WAVFKEYIQE (157 aa). Residues Asp-873, Glu-875, and Asp-982 each contribute to the a divalent metal cation site. The interval 1035–1067 is disordered; sequence TSITTTTNPNIHDANTSTTTTTAITTTPPEGHD. The span at 1050–1061 shows a compositional bias: low complexity; that stretch reads TSTTTTTAITTT. Residue Asp-1071 coordinates a divalent metal cation. 2 disordered regions span residues 1110 to 1152 and 1167 to 1222; these read PARY…LSGR and ASVT…SPMR. Residues 1119 to 1133 are compositionally biased toward low complexity; that stretch reads PNPNNNNINNGVNPN. Positions 1134 to 1144 are enriched in polar residues; it reads GLSTPGSTNPI. The segment covering 1180–1191 has biased composition (low complexity); sequence NGSMSGSTPSTP. The span at 1207 to 1216 shows a compositional bias: gly residues; the sequence is SFGGAKGLTF.

This sequence belongs to the peptidase C19 family. PAN2 subfamily. In terms of assembly, forms a heterotrimer with an asymmetric homodimer of the regulatory subunit PAN3 to form the poly(A)-nuclease (PAN) deadenylation complex. A divalent metal cation serves as cofactor.

It is found in the cytoplasm. The enzyme catalyses Exonucleolytic cleavage of poly(A) to 5'-AMP.. Positively regulated by the regulatory subunit PAN3. In terms of biological role, catalytic subunit of the poly(A)-nuclease (PAN) deadenylation complex, one of two cytoplasmic mRNA deadenylases involved in mRNA turnover. PAN specifically shortens poly(A) tails of RNA and the activity is stimulated by poly(A)-binding protein PAB1. PAN deadenylation is followed by rapid degradation of the shortened mRNA tails by the CCR4-NOT complex. Deadenylated mRNAs are then degraded by two alternative mechanisms, namely exosome-mediated 3'-5' exonucleolytic degradation, or deadenylation-dependent mRNA decaping and subsequent 5'-3' exonucleolytic degradation by XRN1. May also be involved in post-transcriptional maturation of mRNA poly(A) tails. The polypeptide is PAN2-PAN3 deadenylation complex catalytic subunit PAN2 (Coccidioides immitis (strain RS) (Valley fever fungus)).